A 290-amino-acid polypeptide reads, in one-letter code: CMRF35-like molecule 1 (290 aa).

The N-terminal stretch at 1–19 (MPLLTLYLLLFWLSGYSIV) is a signal peptide. One can recognise an Ig-like V-type domain in the interval 20–126 (TQITGPTTVN…LGVTVQVTID (107 aa)). At 20–156 (TQITGPTTVN…DNRHKLLKLS (137 aa)) the chain is on the extracellular side. 2 cysteine pairs are disulfide-bonded: C40/C108 and C54/C62. N88 carries N-linked (GlcNAc...) asparagine glycosylation. A helical transmembrane segment spans residues 157-177 (VLLPLIFTILLLLLVAASLLA). Topologically, residues 178-290 (WRMMKYQQKA…PTEYSTISRP (113 aa)) are cytoplasmic. The interval 267–290 (GHLSSHLPGRGPEEPTEYSTISRP) is disordered.

This sequence belongs to the CD300 family. Interacts with PTPN6/SHP-1 in a tyrosine phosphorylation dependent manner. Interacts with IL4R. In terms of processing, phosphorylated on tyrosine. Highly expressed in spleen, peripheral blood leukocyte and monocyte, and lung. Weakly expressed in thymus, heart, brain, placenta, liver, skeletal muscle, kidney, pancreas, prostate, testis, ovary, small intestine or colon. Expressed selectively in monocytes and monocyte-related cells.

Its subcellular location is the cell membrane. Its function is as follows. Acts as an inhibitory receptor for myeloid cells and mast cells. Positively regulates the phagocytosis of apoptotic cells (efferocytosis) via phosphatidylserine (PS) recognition; recognizes and binds PS as a ligand which is expressed on the surface of apoptotic cells. Plays an important role in the maintenance of immune homeostasis, by promoting macrophage-mediated efferocytosis and by inhibiting dendritic cell-mediated efferocytosis. Negatively regulates Fc epsilon receptor-dependent mast cell activation and allergic responses via binding to ceramide and sphingomyelin which act as ligands. May act as a coreceptor for interleukin 4 (IL-4). Associates with and regulates IL-4 receptor alpha-mediated responses by augmenting IL-4- and IL-13-induced signaling. Negatively regulates the Toll-like receptor (TLR) signaling mediated by MYD88 and TRIF through activation of PTPN6/SHP-1 and PTPN11/SHP-2. Inhibits osteoclast formation. Induces macrophage cell death upon engagement. In Homo sapiens (Human), this protein is CMRF35-like molecule 1 (CD300LF).